A 224-amino-acid polypeptide reads, in one-letter code: UPF0173 metal-dependent hydrolase Ta0764 (224 aa).

This sequence belongs to the UPF0173 family.

This Thermoplasma acidophilum (strain ATCC 25905 / DSM 1728 / JCM 9062 / NBRC 15155 / AMRC-C165) protein is UPF0173 metal-dependent hydrolase Ta0764.